Consider the following 159-residue polypeptide: Growth arrest and DNA damage-inducible protein GADD45 gamma (159 aa).

A homodimerization region spans residues 43–86 (VYESAKVLNVDPDNVTFCVLAADEEDEGDIALQIHFTLIQAFCC).

Belongs to the GADD45 family. In terms of assembly, undergoes concentration-dependent homodimerization, which is required for growth inhibititory activity and enhances interaction with PCNA. Interacts with GADD45GIP1. Interacts with PCNA.

In terms of biological role, involved in the regulation of growth and apoptosis. Mediates activation of stress-responsive MTK1/MEKK4 MAPKKK. The protein is Growth arrest and DNA damage-inducible protein GADD45 gamma (Gadd45g) of Mus musculus (Mouse).